A 78-amino-acid polypeptide reads, in one-letter code: Small ribosomal subunit protein bS20 (78 aa).

The protein belongs to the bacterial ribosomal protein bS20 family.

Its function is as follows. Binds directly to 16S ribosomal RNA. This Streptococcus pneumoniae serotype 4 (strain ATCC BAA-334 / TIGR4) protein is Small ribosomal subunit protein bS20.